We begin with the raw amino-acid sequence, 31 residues long: Cytochrome b6-f complex subunit 8 (31 aa).

The chain crosses the membrane as a helical span at residues 5–25 (IVSLAWAALMVVFTFSLSLVV).

This sequence belongs to the PetN family. The 4 large subunits of the cytochrome b6-f complex are cytochrome b6, subunit IV (17 kDa polypeptide, PetD), cytochrome f and the Rieske protein, while the 4 small subunits are PetG, PetL, PetM and PetN. The complex functions as a dimer.

It is found in the plastid. Its subcellular location is the chloroplast thylakoid membrane. Functionally, component of the cytochrome b6-f complex, which mediates electron transfer between photosystem II (PSII) and photosystem I (PSI), cyclic electron flow around PSI, and state transitions. This chain is Cytochrome b6-f complex subunit 8, found in Cicer arietinum (Chickpea).